The primary structure comprises 563 residues: Probable tRNA (uracil-O(2)-)-methyltransferase (563 aa).

Residues 536–563 (TIRKAPCWMSLHHPDGCPVGQEACRYEH) form a C3H1-type zinc finger.

It belongs to the TRM44 family.

Its subcellular location is the cytoplasm. It catalyses the reaction uridine(44) in tRNA(Ser) + S-adenosyl-L-methionine = 2'-O-methyluridine(44) in tRNA(Ser) + S-adenosyl-L-homocysteine + H(+). Its function is as follows. Probable adenosyl-L-methionine (AdoMet)-dependent tRNA (uracil-O(2)-)-methyltransferase. This is Probable tRNA (uracil-O(2)-)-methyltransferase from Caenorhabditis elegans.